Here is a 118-residue protein sequence, read N- to C-terminus: DNA-binding protein M164_1799 (118 aa).

This sequence belongs to the PDCD5 family.

This is DNA-binding protein M164_1799 from Saccharolobus islandicus (strain M.16.4 / Kamchatka #3) (Sulfolobus islandicus).